We begin with the raw amino-acid sequence, 414 residues long: Gamma-glutamyl phosphate reductase (414 aa).

This sequence belongs to the gamma-glutamyl phosphate reductase family.

Its subcellular location is the cytoplasm. The enzyme catalyses L-glutamate 5-semialdehyde + phosphate + NADP(+) = L-glutamyl 5-phosphate + NADPH + H(+). It functions in the pathway amino-acid biosynthesis; L-proline biosynthesis; L-glutamate 5-semialdehyde from L-glutamate: step 2/2. Catalyzes the NADPH-dependent reduction of L-glutamate 5-phosphate into L-glutamate 5-semialdehyde and phosphate. The product spontaneously undergoes cyclization to form 1-pyrroline-5-carboxylate. This chain is Gamma-glutamyl phosphate reductase, found in Clostridium botulinum (strain Eklund 17B / Type B).